Consider the following 602-residue polypeptide: GTP-binding protein 2 (602 aa).

Residues 18–64 are disordered; it reads GPAMGGNLKARGAGGSSSCGGPKGKKKNGRNRGGKANNPPYLPPEAE. Residues 29–39 are compositionally biased toward gly residues; it reads GAGGSSSCGGP. Residues 40-50 show a composition bias toward basic residues; the sequence is KGKKKNGRNRG. Residues 170–398 form the tr-type G domain; sequence FLDLRVAVLG…LNILPPLTNS (229 aa). Residues 179–186, 260–264, and 316–319 each bind GTP; these read GNVDSGKS, DLAGH, and SKVD.

This sequence belongs to the TRAFAC class translation factor GTPase superfamily. Classic translation factor GTPase family. GTPBP1 subfamily. Predominantly expressed in thymus, spleen, and testis. Expressed at lower levels in brain, heart, lung, kidney, and skeletal muscle. In testis, specifically expressed in spermatocytes and round spermatids.

The sequence is that of GTP-binding protein 2 from Mus musculus (Mouse).